The sequence spans 553 residues: Probable glucomannan 4-beta-mannosyltransferase 1 (553 aa).

A helical membrane pass occupies residues 64 to 84 (LLPVFKGLVVMCLVLSIIVFF). Aspartate 163 is an active-site residue. Residues aspartate 222 and aspartate 224 each contribute to the substrate site. Aspartate 316 is a catalytic residue. 4 helical membrane passes run 395–415 (VAVHFLTFFFYCIIVPTSVFF), 431–451 (LISIFHTLATPRSFYLVIFWV), 510–530 (EVMVGVYILGCALYGLIYGHT), and 531–551 (WLHFYLFLQATAFFVSGFGFV).

It belongs to the glycosyltransferase 2 family. Plant cellulose synthase-like A subfamily.

Its subcellular location is the golgi apparatus membrane. It catalyses the reaction GDP-mannose + (glucomannan)n = GDP + (glucomannan)n+1.. In terms of biological role, probable mannan synthase which consists of a 4-beta-mannosyltransferase activity on mannan using GDP-mannose. The beta-1,4-mannan product is the backbone for galactomannan synthesis by galactomannan galactosyltransferase. Galactomannan is a noncellulosic polysaccharides of plant cell wall. This Arabidopsis thaliana (Mouse-ear cress) protein is Probable glucomannan 4-beta-mannosyltransferase 1.